A 214-amino-acid chain; its full sequence is MHMAIGLVGRKCGMTRIFTDAGVSVPVTVIEVDPNRITQIKTLETDGYQAVQVTTGERRESRVTNAQKGHFAKAGVAAGRLVKEFRVTEAELEGREVGGTIGVDLFTVGQIVDVTGQSKGKGFQGGVKRWNFRTQDATHGNSVSHRVLGSTGQNQTPGRVFKGKKMAGHLGDERVTVQGLEIVSVDTERSVLVVKGAIPGATGGDVIVRPTIKA.

Residue Gln155 is modified to N5-methylglutamine.

The protein belongs to the universal ribosomal protein uL3 family. In terms of assembly, part of the 50S ribosomal subunit. Forms a cluster with proteins L14 and L19. Methylated by PrmB.

In terms of biological role, one of the primary rRNA binding proteins, it binds directly near the 3'-end of the 23S rRNA, where it nucleates assembly of the 50S subunit. This chain is Large ribosomal subunit protein uL3, found in Acinetobacter baumannii (strain ACICU).